Consider the following 216-residue polypeptide: Phosphatidylserine decarboxylase proenzyme (216 aa).

Ser-183 acts as the Schiff-base intermediate with substrate; via pyruvic acid in catalysis. Ser-183 is subject to Pyruvic acid (Ser); by autocatalysis.

The protein belongs to the phosphatidylserine decarboxylase family. PSD-A subfamily. Heterodimer of a large membrane-associated beta subunit and a small pyruvoyl-containing alpha subunit. It depends on pyruvate as a cofactor. Post-translationally, is synthesized initially as an inactive proenzyme. Formation of the active enzyme involves a self-maturation process in which the active site pyruvoyl group is generated from an internal serine residue via an autocatalytic post-translational modification. Two non-identical subunits are generated from the proenzyme in this reaction, and the pyruvate is formed at the N-terminus of the alpha chain, which is derived from the carboxyl end of the proenzyme. The post-translation cleavage follows an unusual pathway, termed non-hydrolytic serinolysis, in which the side chain hydroxyl group of the serine supplies its oxygen atom to form the C-terminus of the beta chain, while the remainder of the serine residue undergoes an oxidative deamination to produce ammonia and the pyruvoyl prosthetic group on the alpha chain.

It localises to the cell membrane. The enzyme catalyses a 1,2-diacyl-sn-glycero-3-phospho-L-serine + H(+) = a 1,2-diacyl-sn-glycero-3-phosphoethanolamine + CO2. Its pathway is phospholipid metabolism; phosphatidylethanolamine biosynthesis; phosphatidylethanolamine from CDP-diacylglycerol: step 2/2. Catalyzes the formation of phosphatidylethanolamine (PtdEtn) from phosphatidylserine (PtdSer). The chain is Phosphatidylserine decarboxylase proenzyme from Cupriavidus taiwanensis (strain DSM 17343 / BCRC 17206 / CCUG 44338 / CIP 107171 / LMG 19424 / R1) (Ralstonia taiwanensis (strain LMG 19424)).